A 159-amino-acid chain; its full sequence is 2-C-methyl-D-erythritol 2,4-cyclodiphosphate synthase (159 aa).

Asp-8 and His-10 together coordinate a divalent metal cation. 4-CDP-2-C-methyl-D-erythritol 2-phosphate-binding positions include 8–10 and 34–35; these read DVH and HS. His-42 contacts a divalent metal cation. Residues 56–58, 132–135, and Arg-142 contribute to the 4-CDP-2-C-methyl-D-erythritol 2-phosphate site; these read DIG and TTTE.

It belongs to the IspF family. Homotrimer. A divalent metal cation serves as cofactor.

The catalysed reaction is 4-CDP-2-C-methyl-D-erythritol 2-phosphate = 2-C-methyl-D-erythritol 2,4-cyclic diphosphate + CMP. It functions in the pathway isoprenoid biosynthesis; isopentenyl diphosphate biosynthesis via DXP pathway; isopentenyl diphosphate from 1-deoxy-D-xylulose 5-phosphate: step 4/6. Functionally, involved in the biosynthesis of isopentenyl diphosphate (IPP) and dimethylallyl diphosphate (DMAPP), two major building blocks of isoprenoid compounds. Catalyzes the conversion of 4-diphosphocytidyl-2-C-methyl-D-erythritol 2-phosphate (CDP-ME2P) to 2-C-methyl-D-erythritol 2,4-cyclodiphosphate (ME-CPP) with a corresponding release of cytidine 5-monophosphate (CMP). The sequence is that of 2-C-methyl-D-erythritol 2,4-cyclodiphosphate synthase from Chlorobium phaeobacteroides (strain BS1).